Here is a 45-residue protein sequence, read N- to C-terminus: Putative UPF0377 protein YJL222W-B (45 aa).

The protein belongs to the UPF0377 family.

In Saccharomyces cerevisiae (strain ATCC 204508 / S288c) (Baker's yeast), this protein is Putative UPF0377 protein YJL222W-B.